A 216-amino-acid polypeptide reads, in one-letter code: LexA repressor (216 aa).

The segment at residues 29–49 is a DNA-binding region (H-T-H motif); that stretch reads RAEIAQALGFRSPNAAEDHLK. Catalysis depends on for autocatalytic cleavage activity residues Ser134 and Lys171.

Belongs to the peptidase S24 family. As to quaternary structure, homodimer.

The catalysed reaction is Hydrolysis of Ala-|-Gly bond in repressor LexA.. Functionally, represses a number of genes involved in the response to DNA damage (SOS response), including recA and lexA. In the presence of single-stranded DNA, RecA interacts with LexA causing an autocatalytic cleavage which disrupts the DNA-binding part of LexA, leading to derepression of the SOS regulon and eventually DNA repair. In Bordetella parapertussis (strain 12822 / ATCC BAA-587 / NCTC 13253), this protein is LexA repressor.